A 582-amino-acid polypeptide reads, in one-letter code: ATP-dependent lipid A-core flippase (582 aa).

5 consecutive transmembrane segments (helical) span residues 26–46 (LIAASVALILNALVDSSLIYL), 68–88 (ILVMLFILLRGVSNYIASYCL), 140–160 (YVLVTIVREGAYLISLFAVMV), 164–184 (WQLSIVLFLLAPIIAFLISIV), and 252–272 (GLVQLIASLALSAVLYVATFP). In terms of domain architecture, ABC transmembrane type-1 spans 27 to 310 (IAASVALILN…LTSVNSQFQR (284 aa)). One can recognise an ABC transporter domain in the interval 342 to 578 (ITFDNVIFSY…GGAYKQLYSM (237 aa)). 376–383 (GRSGSGKS) is an ATP binding site.

The protein belongs to the ABC transporter superfamily. Lipid exporter (TC 3.A.1.106) family. As to quaternary structure, homodimer.

The protein resides in the cell inner membrane. The enzyme catalyses ATP + H2O + lipid A-core oligosaccharideSide 1 = ADP + phosphate + lipid A-core oligosaccharideSide 2.. In terms of biological role, involved in lipopolysaccharide (LPS) biosynthesis. Translocates lipid A-core from the inner to the outer leaflet of the inner membrane. Transmembrane domains (TMD) form a pore in the inner membrane and the ATP-binding domain (NBD) is responsible for energy generation. The chain is ATP-dependent lipid A-core flippase from Haemophilus ducreyi (strain 35000HP / ATCC 700724).